Here is a 448-residue protein sequence, read N- to C-terminus: Methionine aminopeptidase 2-1 (448 aa).

A disordered region spans residues 1–90 (MAAQASEKLE…PPRVPVSSLF (90 aa)). The span at 22–33 (AAGPAKAGQADA) shows a compositional bias: low complexity. Acidic residues predominate over residues 34–46 (GEVEDESDDDADD). The span at 47 to 58 (AGAAADGAANGA) shows a compositional bias: low complexity. Positions 59 to 74 (AKKKKKRKSKKKKKGG) are enriched in basic residues. Positions 75 to 88 (AKVQSSPPRVPVSS) are enriched in low complexity. Residue His198 participates in substrate binding. The a divalent metal cation site is built by Asp218, Asp229, and His301. His309 lines the substrate pocket. 2 residues coordinate a divalent metal cation: Glu334 and Glu429.

This sequence belongs to the peptidase M24A family. Methionine aminopeptidase eukaryotic type 2 subfamily. Co(2+) is required as a cofactor. It depends on Zn(2+) as a cofactor. The cofactor is Mn(2+). Requires Fe(2+) as cofactor.

It is found in the cytoplasm. The catalysed reaction is Release of N-terminal amino acids, preferentially methionine, from peptides and arylamides.. Its function is as follows. Cotranslationally removes the N-terminal methionine from nascent proteins. The N-terminal methionine is often cleaved when the second residue in the primary sequence is small and uncharged (Met-Ala-, Cys, Gly, Pro, Ser, Thr, or Val). This is Methionine aminopeptidase 2-1 from Emericella nidulans (strain FGSC A4 / ATCC 38163 / CBS 112.46 / NRRL 194 / M139) (Aspergillus nidulans).